We begin with the raw amino-acid sequence, 118 residues long: Iron-sulfur cluster assembly protein CyaY (118 aa).

Belongs to the frataxin family.

Its function is as follows. Involved in iron-sulfur (Fe-S) cluster assembly. May act as a regulator of Fe-S biogenesis. This is Iron-sulfur cluster assembly protein CyaY from Buchnera aphidicola subsp. Baizongia pistaciae (strain Bp).